The sequence spans 485 residues: Glutamyl-tRNA(Gln) amidotransferase subunit A (485 aa).

Active-site charge relay system residues include K79 and S154. The Acyl-ester intermediate role is filled by S178.

This sequence belongs to the amidase family. GatA subfamily. In terms of assembly, heterotrimer of A, B and C subunits.

The enzyme catalyses L-glutamyl-tRNA(Gln) + L-glutamine + ATP + H2O = L-glutaminyl-tRNA(Gln) + L-glutamate + ADP + phosphate + H(+). Functionally, allows the formation of correctly charged Gln-tRNA(Gln) through the transamidation of misacylated Glu-tRNA(Gln) in organisms which lack glutaminyl-tRNA synthetase. The reaction takes place in the presence of glutamine and ATP through an activated gamma-phospho-Glu-tRNA(Gln). In Geobacillus thermodenitrificans (strain NG80-2), this protein is Glutamyl-tRNA(Gln) amidotransferase subunit A.